The following is a 441-amino-acid chain: 3-phosphoshikimate 1-carboxyvinyltransferase (441 aa).

Residues 1–24 (MSGTGQSDDPRELKAGGSLQGRVK) form a disordered region. The 3-phosphoshikimate site is built by Lys29, Ser30, and Arg34. Position 29 (Lys29) interacts with phosphoenolpyruvate. Phosphoenolpyruvate is bound by residues Gly103 and Arg132. 3-phosphoshikimate contacts are provided by Ser177, Gln179, Asp328, and Lys355. A phosphoenolpyruvate-binding site is contributed by Gln179. Asp328 functions as the Proton acceptor in the catalytic mechanism. Residues Arg359 and Arg401 each coordinate phosphoenolpyruvate.

This sequence belongs to the EPSP synthase family. In terms of assembly, monomer.

The protein localises to the cytoplasm. The catalysed reaction is 3-phosphoshikimate + phosphoenolpyruvate = 5-O-(1-carboxyvinyl)-3-phosphoshikimate + phosphate. It functions in the pathway metabolic intermediate biosynthesis; chorismate biosynthesis; chorismate from D-erythrose 4-phosphate and phosphoenolpyruvate: step 6/7. In terms of biological role, catalyzes the transfer of the enolpyruvyl moiety of phosphoenolpyruvate (PEP) to the 5-hydroxyl of shikimate-3-phosphate (S3P) to produce enolpyruvyl shikimate-3-phosphate and inorganic phosphate. The polypeptide is 3-phosphoshikimate 1-carboxyvinyltransferase (Synechococcus sp. (strain CC9605)).